The following is a 290-amino-acid chain: Translin-associated protein X (290 aa).

Residues 1–32 (MSNKEGSGGFRKRKHDNFPHNQRREGKDVNSS) are disordered. Basic and acidic residues predominate over residues 16–28 (DNFPHNQRREGKD). Residues 73-208 (LLHRITSAPD…MRMCINSVGN (136 aa)) are interaction with C1D. Residues E129 and E197 each contribute to the Mg(2+) site. Residue K279 forms a Glycyl lysine isopeptide (Lys-Gly) (interchain with G-Cter in SUMO2) linkage.

It belongs to the translin family. Ring-shaped heterooctamer of six TSN and two TSNAX subunits. Interacts with GOLGA3, TSNAXIP1, SUN1 and AKAP9. Interacts with the homodimeric form of C1D following gamma-radiation. Interacts with TSN and C1D in a mutually exclusive manner. Sumoylated with SUMO1.

The protein localises to the cytoplasm. Its subcellular location is the perinuclear region. It localises to the golgi apparatus. It is found in the nucleus. Acts in combination with TSN as an endonuclease involved in the activation of the RNA-induced silencing complex (RISC). Possible role in spermatogenesis. This is Translin-associated protein X (TSNAX) from Pongo abelii (Sumatran orangutan).